Consider the following 348-residue polypeptide: Thioesterase-like protein TwmA (348 aa).

It functions in the pathway secondary metabolite biosynthesis. Its function is as follows. Thioesterase-like protein; part of the gene cluster that mediates the biosynthesis of wortmanamides A and B, reduced long-chain polyketides amidated with a specific omega-amino acid, 5-aminopentanoic acid (5PA). The PKS modules of TwmB are involved in the synthesis of the polyketide backbone, whereas the non-canonical C domain of TwmB is a bonafide condensation domain that specifically selects 5PA and catalyzes amidation to release polyketide chain. The C domain clearly prefers C16 and C18 fatty acyl substrates, which is consistent with simultaneous formation of both octaketide and nonaketide acyl amides wortmanamides A and B. Because TwmB lacks a designated enoylreductase (ER) domain, the required activity is provided the enoyl reductase TwmE. The roles of the remaining enzymes have still to be clarified. In Talaromyces wortmannii (Penicillium wortmannii), this protein is Thioesterase-like protein TwmA.